A 145-amino-acid chain; its full sequence is Large ribosomal subunit protein uL15 (145 aa).

Residues Met-1–Leu-58 form a disordered region. Gly residues predominate over residues Arg-19 to Gln-33.

The protein belongs to the universal ribosomal protein uL15 family. In terms of assembly, part of the 50S ribosomal subunit.

Binds to the 23S rRNA. This chain is Large ribosomal subunit protein uL15, found in Borrelia garinii subsp. bavariensis (strain ATCC BAA-2496 / DSM 23469 / PBi) (Borreliella bavariensis).